A 341-amino-acid polypeptide reads, in one-letter code: UDP-3-O-acylglucosamine N-acyltransferase (341 aa).

H239 acts as the Proton acceptor in catalysis.

It belongs to the transferase hexapeptide repeat family. LpxD subfamily. In terms of assembly, homotrimer.

The catalysed reaction is a UDP-3-O-[(3R)-3-hydroxyacyl]-alpha-D-glucosamine + a (3R)-hydroxyacyl-[ACP] = a UDP-2-N,3-O-bis[(3R)-3-hydroxyacyl]-alpha-D-glucosamine + holo-[ACP] + H(+). Its pathway is bacterial outer membrane biogenesis; LPS lipid A biosynthesis. Functionally, catalyzes the N-acylation of UDP-3-O-acylglucosamine using 3-hydroxyacyl-ACP as the acyl donor. Is involved in the biosynthesis of lipid A, a phosphorylated glycolipid that anchors the lipopolysaccharide to the outer membrane of the cell. The chain is UDP-3-O-acylglucosamine N-acyltransferase from Idiomarina loihiensis (strain ATCC BAA-735 / DSM 15497 / L2-TR).